Consider the following 264-residue polypeptide: L-aspartate dehydrogenase (264 aa).

Positions 120 and 186 each coordinate NAD(+). H216 is an active-site residue.

It belongs to the L-aspartate dehydrogenase family.

The catalysed reaction is L-aspartate + NADP(+) + H2O = oxaloacetate + NH4(+) + NADPH + H(+). It carries out the reaction L-aspartate + NAD(+) + H2O = oxaloacetate + NH4(+) + NADH + H(+). Its pathway is cofactor biosynthesis; NAD(+) biosynthesis; iminoaspartate from L-aspartate (dehydrogenase route): step 1/1. Functionally, specifically catalyzes the NAD or NADP-dependent dehydrogenation of L-aspartate to iminoaspartate. The polypeptide is L-aspartate dehydrogenase (Serratia proteamaculans (strain 568)).